Consider the following 671-residue polypeptide: MNKITKKQKMSFAGLLIAIGIVYGDIGTSPLYVMKSIVTENGGIANVNRELIVGSISLILWTVTLLTTVKYVMIALKATNHGEGGIFSLYALVRKRAKWLVIPALIGGAALLADGTLTPAVTVTTSIEGLKNMRFGDVIPVPSQEVVIMITIIILVILFSIQRMGTSVIGKAFGPIMLIWFTFLGVVGIANLSHDWSLLEAINPIHAIRILVSPANKVGILILGSVFLATTGAEALYSDVGHVSKANIIGSWPYIFVCLSLNYLGQGAWILHNVSYHAGNGDFNPFFEVVPSNLRLFAIALATIAAIIASQALITGSFTLVAEASSLKFLPRMNIIYPSTEKGQIYIPLINKMICVVTVAIVFLFRTSHHMEAAYGLAITVTMLMTTILLFEYLGKKGKPLYLRVIFLIAFAFIEGMFLISSLTKFLHGGYVTVLIAGFILVIMYVWFYGNKIRDKREAKNAYVRLDEYTEMLTDLSHCEDYPVYATNVVYMAKVKYNKFIKREMLYSILDKRPKRAKAYWFVTVNVTNEPYTAEYAVNTYGTKNVINVQLYLGFRKQTSVNVYLRQIVHELIADGTIEAQPQRFTTTPGRDVGDFSFVIVNDVISPLTKLTGYEKFMVEARVWLQNLSSNPASWFGLEYADTVVERVPLILGKHQESYIKRIKPKKQTKK.

Transmembrane regions (helical) follow at residues 12–32 (FAGLLIAIGIVYGDIGTSPLY), 56–76 (ISLILWTVTLLTTVKYVMIAL), 99–119 (WLVIPALIGGAALLADGTLTP), 139–159 (IPVPSQEVVIMITIIILVILF), 172–192 (AFGPIMLIWFTFLGVVGIANL), 218–238 (VGILILGSVFLATTGAEALYS), 251–271 (SWPYIFVCLSLNYLGQGAWIL), 296–316 (LFAIALATIAAIIASQALITG), 345–365 (IYIPLINKMICVVTVAIVFLF), 374–394 (AYGLAITVTMLMTTILLFEYL), 400–420 (PLYLRVIFLIAFAFIEGMFLI), and 429–449 (GGYVTVLIAGFILVIMYVWFY).

It belongs to the HAK/KUP transporter (TC 2.A.72) family.

Its subcellular location is the cell membrane. It catalyses the reaction K(+)(in) + H(+)(in) = K(+)(out) + H(+)(out). In terms of biological role, transport of potassium into the cell. Likely operates as a K(+):H(+) symporter. This Lactobacillus acidophilus (strain ATCC 700396 / NCK56 / N2 / NCFM) protein is Probable potassium transport system protein Kup 2.